The following is a 263-amino-acid chain: HLA class II histocompatibility antigen, DM beta chain (263 aa).

An N-terminal signal peptide occupies residues 1–18 (MITFLPLLLGLSLGCTGA). The tract at residues 19 to 112 (GGFVAHVEST…PFWGSLTNRT (94 aa)) is beta-1. At 19–218 (GGFVAHVEST…PGLSPMQTLK (200 aa)) the chain is on the lumenal side. Cystine bridges form between Cys-29/Cys-97 and Cys-43/Cys-53. An N-linked (GlcNAc...) asparagine glycan is attached at Asn-110. The interval 113-207 (RPPSVQVAKT…GAPEPILRDW (95 aa)) is beta-2. The 95-residue stretch at 114-208 (PPSVQVAKTT…APEPILRDWT (95 aa)) folds into the Ig-like C1-type domain. Cys-135 and Cys-192 form a disulfide bridge. Residues 208-218 (TPGLSPMQTLK) are connecting peptide. Residues 219 to 239 (VSVSAVTLGLGLIIFSLGVIS) form a helical membrane-spanning segment. Residues 240–263 (WRRAGHSSYTPLPGSNYSEGWHIS) are Cytoplasmic-facing. Residues 248-251 (YTPL) carry the YXXZ motif motif.

It belongs to the MHC class II family. As to quaternary structure, heterodimer of an alpha chain (DMA) and a beta chain (DMB). Interacts with MHCII; this interaction mediates rapid selection of high-affinity peptides in a pH-dependent manner, with an optimum at pH 5.5.

Its subcellular location is the late endosome membrane. It localises to the lysosome membrane. In terms of biological role, plays a critical role in catalyzing the release of class II-associated invariant chain peptide (CLIP) from newly synthesized MHC class II molecules and freeing the peptide binding site for acquisition of antigenic peptides. In B-cells, the interaction between HLA-DM and MHC class II molecules is regulated by HLA-DO. In Homo sapiens (Human), this protein is HLA class II histocompatibility antigen, DM beta chain (HLA-DMB).